A 440-amino-acid polypeptide reads, in one-letter code: Trigger factor (440 aa).

The PPIase FKBP-type domain maps to Gly163–Pro248.

The protein belongs to the FKBP-type PPIase family. Tig subfamily.

Its subcellular location is the cytoplasm. The enzyme catalyses [protein]-peptidylproline (omega=180) = [protein]-peptidylproline (omega=0). Its function is as follows. Involved in protein export. Acts as a chaperone by maintaining the newly synthesized protein in an open conformation. Functions as a peptidyl-prolyl cis-trans isomerase. The polypeptide is Trigger factor (Lactiplantibacillus plantarum (strain ATCC BAA-793 / NCIMB 8826 / WCFS1) (Lactobacillus plantarum)).